We begin with the raw amino-acid sequence, 1071 residues long: Carbamoyl phosphate synthase large chain (1071 aa).

The tract at residues 1–403 is carboxyphosphate synthetic domain; that stretch reads MPKRTDLKSI…SFQKALRGLE (403 aa). Residues arginine 129, arginine 169, glycine 175, glycine 176, glutamine 208, valine 210, glutamate 215, glycine 241, valine 242, histidine 243, glutamine 285, and glutamate 299 each contribute to the ATP site. The ATP-grasp 1 domain occupies 133–328; sequence KEAMEKIGLS…IAKVAAKLAV (196 aa). Positions 285, 299, and 301 each coordinate Mg(2+). Glutamine 285, glutamate 299, and asparagine 301 together coordinate Mn(2+). The segment at 404–548 is oligomerization domain; that stretch reads TGLCGFNPRS…YSTYEEECEA (145 aa). The interval 549 to 930 is carbamoyl phosphate synthetic domain; that stretch reads RPSDRKKVMI…AYYKAQLGAG (382 aa). The region spanning 673–864 is the ATP-grasp 2 domain; it reads QKVLNDLGLR…LAKVGARCMA (192 aa). Residues arginine 709, phenylalanine 748, leucine 750, glutamate 755, glycine 780, isoleucine 781, histidine 782, serine 783, glutamine 823, and glutamate 835 each contribute to the ATP site. Mg(2+)-binding residues include glutamine 823, glutamate 835, and asparagine 837. Residues glutamine 823, glutamate 835, and asparagine 837 each contribute to the Mn(2+) site. The region spanning 931-1071 is the MGS-like domain; that stretch reads ERLNPTGKIF…ELHGRLKNRS (141 aa). The tract at residues 931 to 1071 is allosteric domain; it reads ERLNPTGKIF…ELHGRLKNRS (141 aa).

This sequence belongs to the CarB family. In terms of assembly, composed of two chains; the small (or glutamine) chain promotes the hydrolysis of glutamine to ammonia, which is used by the large (or ammonia) chain to synthesize carbamoyl phosphate. Tetramer of heterodimers (alpha,beta)4. Mg(2+) serves as cofactor. Requires Mn(2+) as cofactor.

The catalysed reaction is hydrogencarbonate + L-glutamine + 2 ATP + H2O = carbamoyl phosphate + L-glutamate + 2 ADP + phosphate + 2 H(+). The enzyme catalyses hydrogencarbonate + NH4(+) + 2 ATP = carbamoyl phosphate + 2 ADP + phosphate + 2 H(+). The protein operates within amino-acid biosynthesis; L-arginine biosynthesis; carbamoyl phosphate from bicarbonate: step 1/1. It functions in the pathway pyrimidine metabolism; UMP biosynthesis via de novo pathway; (S)-dihydroorotate from bicarbonate: step 1/3. Large subunit of the glutamine-dependent carbamoyl phosphate synthetase (CPSase). CPSase catalyzes the formation of carbamoyl phosphate from the ammonia moiety of glutamine, carbonate, and phosphate donated by ATP, constituting the first step of 2 biosynthetic pathways, one leading to arginine and/or urea and the other to pyrimidine nucleotides. The large subunit (synthetase) binds the substrates ammonia (free or transferred from glutamine from the small subunit), hydrogencarbonate and ATP and carries out an ATP-coupled ligase reaction, activating hydrogencarbonate by forming carboxy phosphate which reacts with ammonia to form carbamoyl phosphate. This is Carbamoyl phosphate synthase large chain from Neisseria meningitidis serogroup A / serotype 4A (strain DSM 15465 / Z2491).